The chain runs to 504 residues: Maturase K (504 aa).

Belongs to the intron maturase 2 family. MatK subfamily.

It is found in the plastid. It localises to the chloroplast. Usually encoded in the trnK tRNA gene intron. Probably assists in splicing its own and other chloroplast group II introns. The polypeptide is Maturase K (Impatiens capensis (Spotted jewelweed)).